Reading from the N-terminus, the 670-residue chain is Probable metal-nicotianamine transporter YSL4 (670 aa).

Transmembrane regions (helical) follow at residues 35–55, 59–79, 107–127, 151–171, 273–293, 318–338, 389–409, 416–436, 450–470, 507–527, 559–579, 601–621, and 636–656; these read ITIR…IITH, LTIG…FFFI, CVVS…LIAM, GLWW…FCLV, LVNC…WPFI, VFIA…KIIV, FAVS…PLIF, FVLC…YGAG, GLFI…GLAA, LGTA…WTAF, PKHC…VNLI, FYIG…MLVW, and VASG…ILSI.

Belongs to the YSL (TC 2.A.67.2) family.

It is found in the membrane. In terms of biological role, may be involved in the transport of nicotianamine-chelated metals. This Arabidopsis thaliana (Mouse-ear cress) protein is Probable metal-nicotianamine transporter YSL4 (YSL4).